The primary structure comprises 84 residues: Cell division topological specificity factor (84 aa).

It belongs to the MinE family.

Prevents the cell division inhibition by proteins MinC and MinD at internal division sites while permitting inhibition at polar sites. This ensures cell division at the proper site by restricting the formation of a division septum at the midpoint of the long axis of the cell. The polypeptide is Cell division topological specificity factor (Ectopseudomonas mendocina (strain ymp) (Pseudomonas mendocina)).